Reading from the N-terminus, the 515-residue chain is Cytochrome P450 705A22 (515 aa).

Residues 9–29 traverse the membrane as a helical segment; the sequence is FQNCFIFILIFLLTFLCFFFF. Cys-454 lines the heme pocket.

Belongs to the cytochrome P450 family. Requires heme as cofactor.

It is found in the membrane. Functionally, plays a role in the gravitropic response of the inflorescence stems and roots. May affect the synthesis of flavonols that have a role in regulating auxin transport. The polypeptide is Cytochrome P450 705A22 (Arabidopsis thaliana (Mouse-ear cress)).